Here is a 572-residue protein sequence, read N- to C-terminus: Proline--tRNA ligase (572 aa).

It belongs to the class-II aminoacyl-tRNA synthetase family. ProS type 1 subfamily. In terms of assembly, homodimer.

It is found in the cytoplasm. It catalyses the reaction tRNA(Pro) + L-proline + ATP = L-prolyl-tRNA(Pro) + AMP + diphosphate. In terms of biological role, catalyzes the attachment of proline to tRNA(Pro) in a two-step reaction: proline is first activated by ATP to form Pro-AMP and then transferred to the acceptor end of tRNA(Pro). As ProRS can inadvertently accommodate and process non-cognate amino acids such as alanine and cysteine, to avoid such errors it has two additional distinct editing activities against alanine. One activity is designated as 'pretransfer' editing and involves the tRNA(Pro)-independent hydrolysis of activated Ala-AMP. The other activity is designated 'posttransfer' editing and involves deacylation of mischarged Ala-tRNA(Pro). The misacylated Cys-tRNA(Pro) is not edited by ProRS. In Escherichia coli O7:K1 (strain IAI39 / ExPEC), this protein is Proline--tRNA ligase.